The primary structure comprises 378 residues: Beta sliding clamp (378 aa).

This sequence belongs to the beta sliding clamp family. In terms of assembly, forms a ring-shaped head-to-tail homodimer around DNA which binds and tethers DNA polymerases and other proteins to the DNA. The DNA replisome complex has a single clamp-loading complex (3 tau and 1 each of delta, delta', psi and chi subunits) which binds 3 Pol III cores (1 core on the leading strand and 2 on the lagging strand) each with a beta sliding clamp dimer. Additional proteins in the replisome are other copies of gamma, psi and chi, Ssb, DNA helicase and RNA primase.

It is found in the cytoplasm. Functionally, confers DNA tethering and processivity to DNA polymerases and other proteins. Acts as a clamp, forming a ring around DNA (a reaction catalyzed by the clamp-loading complex) which diffuses in an ATP-independent manner freely and bidirectionally along dsDNA. Initially characterized for its ability to contact the catalytic subunit of DNA polymerase III (Pol III), a complex, multichain enzyme responsible for most of the replicative synthesis in bacteria; Pol III exhibits 3'-5' exonuclease proofreading activity. The beta chain is required for initiation of replication as well as for processivity of DNA replication. This chain is Beta sliding clamp (dnaN), found in Streptococcus pneumoniae (strain ATCC BAA-255 / R6).